The chain runs to 378 residues: Probable G-protein coupled receptor frpr-1 (378 aa).

The next 7 helical transmembrane spans lie at 47 to 67 (LVVIGLMLPLIGCLGLIGNAL), 85 to 105 (LFALACSDIVIILTAFFLFFL), 120 to 140 (AVLSPVMFPLGLTAQTMSVFI), 180 to 200 (VIVCLKIIVKIFLLGIFYNSP), 243 to 263 (TIVMAVGPVLLLIVINTAIVI), 277 to 297 (IITLVLVVCLFISCNVLPLTV), and 315 to 337 (SNLMVVVNSSCNFLIYYTFGSNF).

Belongs to the G-protein coupled receptor 1 family.

The protein localises to the cell membrane. This chain is Probable G-protein coupled receptor frpr-1, found in Caenorhabditis elegans.